The sequence spans 336 residues: Glyceraldehyde-3-phosphate dehydrogenase, plasmid (336 aa).

Residues 12–13, Asp-37, Arg-81, and Ser-123 contribute to the NAD(+) site; that span reads RI. D-glyceraldehyde 3-phosphate is bound by residues 154 to 156 and Thr-185; that span reads SCT. Cys-155 (nucleophile) is an active-site residue. Residue Asn-186 participates in NAD(+) binding. D-glyceraldehyde 3-phosphate contacts are provided by residues Arg-200, 213-214, and Arg-236; that span reads TG. Residue Asn-317 participates in NAD(+) binding.

This sequence belongs to the glyceraldehyde-3-phosphate dehydrogenase family. As to quaternary structure, homotetramer.

It catalyses the reaction D-glyceraldehyde 3-phosphate + phosphate + NAD(+) = (2R)-3-phospho-glyceroyl phosphate + NADH + H(+). It participates in carbohydrate biosynthesis; Calvin cycle. Could be involved in carbon fixation as a component of the Calvin cycle. Catalyzes the oxidative phosphorylation of glyceraldehyde 3-phosphate (G3P) to 1,3-bisphosphoglycerate (BPG) using the cofactor NAD. The first reaction step involves the formation of a hemiacetal intermediate between G3P and a cysteine residue, and this hemiacetal intermediate is then oxidized to a thioester, with concomitant reduction of NAD to NADH. The reduced NADH is then exchanged with the second NAD, and the thioester is attacked by a nucleophilic inorganic phosphate to produce BPG. This is Glyceraldehyde-3-phosphate dehydrogenase, plasmid (cbbGP) from Cupriavidus necator (strain ATCC 17699 / DSM 428 / KCTC 22496 / NCIMB 10442 / H16 / Stanier 337) (Ralstonia eutropha).